Reading from the N-terminus, the 208-residue chain is uncharacterized protein (208 aa).

This is an uncharacterized protein from Caenorhabditis elegans.